A 673-amino-acid polypeptide reads, in one-letter code: MLEQARRRLAGLNAKLRHHDVLYHGLDAPEVTDHQYDLLVQEKKRLLDEFPDISQYDDYADVVGTPKIDSRFPKVQHLEPMLSLENAFTVQDVEKFITRVRRFLELQPDDILELSCELKMDGMSFSALYHGGKLTRVATRGNGHFGEDITTNAMVLRGLPHQLDSAPEVLEVRGEIYMHHEDFEKLRGSCNFANPRNAAAGSIRQLNQKIVEERNLSYVAYSAVNSTFATQQEILKQLDEWGFHTNKQVLFTDKIEEAIAFYNSVYTTRSALGYDIDGVVYKVNSTNFQKLLGATGKSPRWAIAHKFPSTEARTKLLDITVQVGRTGVVTPIAELEPINIGGVMVSRASLHNLNEIERKDVRIGDLVIVKRAGEVIPQVVDVDKTLRSSGTQKFVFPSHCPSCGSKLHREPGEVALRCVAELSCKAQALERVKHFVSRDGLNIMGLGAKQIEFFCNHGLIGSIADIFSLEEKLHGINLDTEHGWGEKSVANLIAAIRNSATVRLSNFIFALGIRFIGVGAAKLVAEHYRSYKNWHQAMLALTETHDTVQIRGLGEKSISSLKAFFSVQGNLEVLESLSAKLNILDEASPAQRGSSAISGKTVVFTGTLESMSRTEAKLQAESLGAKVANSVSANTWLLVAGSNPGSKHEKALSLNVRVIDEQTWVKMVEDARS.

Residues 33–37 (DHQYD), 83–84 (SL), and glutamate 117 each bind NAD(+). Lysine 119 (N6-AMP-lysine intermediate) is an active-site residue. NAD(+) is bound by residues arginine 140, glutamate 175, lysine 282, and lysine 306. Zn(2+)-binding residues include cysteine 400, cysteine 403, cysteine 418, and cysteine 424. The BRCT domain occupies 592 to 673 (RGSSAISGKT…WVKMVEDARS (82 aa)).

The protein belongs to the NAD-dependent DNA ligase family. LigA subfamily. Requires Mg(2+) as cofactor. Mn(2+) is required as a cofactor.

The enzyme catalyses NAD(+) + (deoxyribonucleotide)n-3'-hydroxyl + 5'-phospho-(deoxyribonucleotide)m = (deoxyribonucleotide)n+m + AMP + beta-nicotinamide D-nucleotide.. Its function is as follows. DNA ligase that catalyzes the formation of phosphodiester linkages between 5'-phosphoryl and 3'-hydroxyl groups in double-stranded DNA using NAD as a coenzyme and as the energy source for the reaction. It is essential for DNA replication and repair of damaged DNA. This Anaplasma marginale (strain St. Maries) protein is DNA ligase.